Here is a 471-residue protein sequence, read N- to C-terminus: MAVPSVKGKEYESVSEIRGQLLVVEGVSDAGYGELVDIEMPSGEKRRGIVLETGKGLAVVQVFEGTTGISPAGTKVRFTGRILEMGVSEDMLGRIMNALGEPIDGGAPIKAVEKRNVWGEPINPYAREYPDEFIETGISAIDGMNSLVRGQKLPIFSGSGLPHNKLAAQIARQATVRGEEESFAVVFAAVGIQYDELLFFKKAFEETGAISRTAMFVSLANEPAMMKIVTPRAALTLAEYLAFQKDMHVLVIITDMTNYCEALREISASREEVPSRQGYPGYMYTDLATIYERAGRVKGSKGSITQMPILTMPNDDITHPIPDLTGYITEGQIVLSRDLHNKGIYPPINVLMSLSRLMRDGIGKGKTREDHPDVANQLFAAYSRAVELRGLAAIVGEESLSEVDRKYLRFGEAFEQKFLKQDYYERRTIEQTLDLAWEVLSILPEEELTKIRPEYIKKYHPKYRVKAASQK.

Belongs to the ATPase alpha/beta chains family. Has multiple subunits with at least A(3), B(3), C, D, E, F, H, I and proteolipid K(x).

Its subcellular location is the cell membrane. Functionally, component of the A-type ATP synthase that produces ATP from ADP in the presence of a proton gradient across the membrane. The B chain is a regulatory subunit. In Ignicoccus hospitalis (strain KIN4/I / DSM 18386 / JCM 14125), this protein is A-type ATP synthase subunit B.